The chain runs to 153 residues: 6,7-dimethyl-8-ribityllumazine synthase (153 aa).

5-amino-6-(D-ribitylamino)uracil contacts are provided by residues phenylalanine 21, alanine 55–glutamate 57, and threonine 79–isoleucine 81. Alanine 84 to threonine 85 contacts (2S)-2-hydroxy-3-oxobutyl phosphate. Histidine 87 (proton donor) is an active-site residue. Phenylalanine 112 lines the 5-amino-6-(D-ribitylamino)uracil pocket. Arginine 126 is a binding site for (2S)-2-hydroxy-3-oxobutyl phosphate.

The protein belongs to the DMRL synthase family. As to quaternary structure, forms an icosahedral capsid composed of 60 subunits, arranged as a dodecamer of pentamers.

It catalyses the reaction (2S)-2-hydroxy-3-oxobutyl phosphate + 5-amino-6-(D-ribitylamino)uracil = 6,7-dimethyl-8-(1-D-ribityl)lumazine + phosphate + 2 H2O + H(+). It participates in cofactor biosynthesis; riboflavin biosynthesis; riboflavin from 2-hydroxy-3-oxobutyl phosphate and 5-amino-6-(D-ribitylamino)uracil: step 1/2. Functionally, catalyzes the formation of 6,7-dimethyl-8-ribityllumazine by condensation of 5-amino-6-(D-ribitylamino)uracil with 3,4-dihydroxy-2-butanone 4-phosphate. This is the penultimate step in the biosynthesis of riboflavin. The chain is 6,7-dimethyl-8-ribityllumazine synthase from Bacillus cereus (strain 03BB102).